A 240-amino-acid chain; its full sequence is Ribonuclease HII (240 aa).

The 190-residue stretch at G21–V210 folds into the RNase H type-2 domain. A divalent metal cation-binding residues include D27, E28, and D119.

This sequence belongs to the RNase HII family. Mn(2+) serves as cofactor. Requires Mg(2+) as cofactor.

It is found in the cytoplasm. It catalyses the reaction Endonucleolytic cleavage to 5'-phosphomonoester.. Functionally, endonuclease that specifically degrades the RNA of RNA-DNA hybrids. The protein is Ribonuclease HII of Paracidovorax citrulli (strain AAC00-1) (Acidovorax citrulli).